A 601-amino-acid polypeptide reads, in one-letter code: Nuclear receptor subfamily 2 group C member 1 (601 aa).

Residues 1–179 form a required for interaction with KAT2B region; it reads MATIEEIAHQ…RLQRCIAFGM (179 aa). The nuclear receptor DNA-binding region spans 111–186; sequence FDLCVVCGDK…FGMKQDSVQC (76 aa). NR C4-type zinc fingers lie at residues 114–134 and 150–169; these read CVVC…CEGC and CRGS…CQYC. Phosphoserine is present on residues Ser198 and Ser216. A Phosphothreonine modification is found at Thr221. Thr223 carries the phosphothreonine; by MAPK1 modification. Lys251 participates in a covalent cross-link: Glycyl lysine isopeptide (Lys-Gly) (interchain with G-Cter in SUMO); alternate. Lys251 participates in a covalent cross-link: Glycyl lysine isopeptide (Lys-Gly) (interchain with G-Cter in SUMO2); alternate. The NR LBD domain occupies 349 to 591; that stretch reads GSVHLITGDS…SVIPHILKME (243 aa). Ser582 carries the post-translational modification Phosphoserine; by PKC. The tract at residues 585 to 601 is required for interaction with NRIP1; sequence PHILKMEPGQYSKTSSL. Lys589 participates in a covalent cross-link: Glycyl lysine isopeptide (Lys-Gly) (interchain with G-Cter in SUMO2).

It belongs to the nuclear hormone receptor family. NR2 subfamily. In terms of assembly, homodimer. Heterodimer; with NR2C2 which is required for chromatin remodeling and for binding to promoter regions such as globin DR1 repeats. Interacts with ESR1; the interaction prevents homodimerization of ESR1 and suppresses its transcriptional activity and cell growth. Interacts with NRIP1 (via its LXXLL motifs); the interaction provides corepressor activity. Interacts with HDAC3 (via the DNA-binding domain); the interaction recruits phosphorylated NR2C1 to PML bodies for sumoylation. Interacts with HDAC4 (via the DNA-binding domain). Interacts with PIAS1; the interaction is required for sumoylation of NR2C1. Interacts with UBE2I; the interaction is required for sumoylation of NR2C1. Interacts with KAT2B; the interaction acts as a corepressor of gene expression. In terms of processing, sumoylation requires both PIAS1 and UBE2I. Sumoylation appears to dissociate NR2C1 from the PML nuclear bodies. Enhances the interaction with NRIP1 but inhibits interaction with KAT2B. In proliferating cells, stimulation by all-trans retinoic acid, activation of MAPK1-mediated phosphorylation and recruitment to PML bodies with subsequent sumoylation, suppresses OCT4 expression. Post-translationally, phosphorylated on several serine and threonine residues. Phosphorylation on Thr-223, stimulated by all-trans retinoic acid (atRA) mediates PML location and sumoylation in proliferating cells which then modulates its association with effector molecules, KAT2B and NRIP1. Phosphorylation on Ser-582 by PKC is important for protein stability and function as activator of RARB.

Its subcellular location is the nucleus. It localises to the PML body. Orphan nuclear receptor. Binds the IR7 element in the promoter of its own gene in an autoregulatory negative feedback mechanism. Primarily repressor of a broad range of genes including ESR1 and RARB. Together with NR2C2, forms the core of the DRED (direct repeat erythroid-definitive) complex that represses embryonic and fetal globin transcription. Binds to hormone response elements (HREs) consisting of two 5'-AGGTCA-3' half site direct repeat consensus sequences. Also activator of OCT4 gene expression. Plays a fundamental role in early embryogenesis and regulates embryonic stem cell proliferation and differentiation. Mediator of retinoic acid-regulated preadipocyte proliferation. The chain is Nuclear receptor subfamily 2 group C member 1 (NR2C1) from Pongo abelii (Sumatran orangutan).